Reading from the N-terminus, the 321-residue chain is Ribose-phosphate pyrophosphokinase 2 (321 aa).

3 residues coordinate Mg(2+): aspartate 130, histidine 132, and aspartate 145. Serine 172 is modified (phosphoserine).

The protein belongs to the ribose-phosphate pyrophosphokinase family.

The protein localises to the cytoplasm. It catalyses the reaction D-ribose 5-phosphate + ATP = 5-phospho-alpha-D-ribose 1-diphosphate + AMP + H(+). The protein operates within metabolic intermediate biosynthesis; 5-phospho-alpha-D-ribose 1-diphosphate biosynthesis; 5-phospho-alpha-D-ribose 1-diphosphate from D-ribose 5-phosphate (route I): step 1/1. Functionally, 5-phosphoribose 1-diphosphate synthase involved in nucleotide, histidine, and tryptophan biosynthesis. Active in heteromultimeric complexes with other 5-phosphoribose 1-diphosphate synthases. In Schizosaccharomyces pombe (strain 972 / ATCC 24843) (Fission yeast), this protein is Ribose-phosphate pyrophosphokinase 2.